A 673-amino-acid chain; its full sequence is MSKDTEAKSEEIMESKVLWYPDSKRNTQTDRFRTLVNREFGLNLANYNDLYQWSVDSYPEFWAQVWKFCGITCSKMYEEVVDVSKRISDVPEWFKGSRLNYAENLLKHKDQDKVALYAASEAKEEIVKVTFGELRRDVALFAAAMRKMGIKIGDRVVGYLPNGVHAVEAMLAAASIGAIWSSTSPDFGVNGVLDRISQIQPKLIFSVAAVVYNGKQHDHMEKLQNVVKGLPDLKKVVVIPYVRSRQETDLSKIPNSVFLEDFLATGKEGDQDPQLEFEQLPFSHPLFIMYSSGTTGAPKCMVHSAGGTLIQHLKEHILHGNMTFNDVIIYYTTTGWMMWNWLISSLAVGASVVLYDGSPLVPSANVLWDLVDRLGITIFGTGAKWLAVLEERDQKPASTHSLQTLHTLLSTGSPLKPQSYEYVYSCIKNNVLLGSISGGTDIISCFMGQNMTVPVYRGEIQARNLGMAVESWSCEGKPVWGESGELVCLKPIPCQPTHFWNDENGSKYHKAYFSTFPGVWAHGDYCKINPKTGGVVMLGRSDGTLNPNGVRFGSSEIYNIVEAFDEVSDSLCVPQYNSDGEERVILFLKMGPNKSFSQELVGKIRGAIRVALSARHVPALILETKDIPYTISGKKVEVAVKQVIAGKEVTQRGAFSNPDSLDLYKNLPELQNF.

The protein belongs to the ATP-dependent AMP-binding enzyme family.

Its subcellular location is the cytoplasm. The protein localises to the cytosol. It carries out the reaction acetoacetate + ATP + CoA = acetoacetyl-CoA + AMP + diphosphate. Functionally, converts acetoacetate to acetoacetyl-CoA in the cytosol. Ketone body-utilizing enzyme, responsible for the synthesis of cholesterol and fatty acids. The protein is Acetoacetyl-CoA synthetase (aacs) of Danio rerio (Zebrafish).